Reading from the N-terminus, the 236-residue chain is Large ribosomal subunit protein uL1 (236 aa).

This sequence belongs to the universal ribosomal protein uL1 family. As to quaternary structure, part of the 50S ribosomal subunit.

Its function is as follows. Binds directly to 23S rRNA. The L1 stalk is quite mobile in the ribosome, and is involved in E site tRNA release. In terms of biological role, protein L1 is also a translational repressor protein, it controls the translation of the L11 operon by binding to its mRNA. The sequence is that of Large ribosomal subunit protein uL1 from Sorangium cellulosum (strain So ce56) (Polyangium cellulosum (strain So ce56)).